We begin with the raw amino-acid sequence, 253 residues long: 2-C-methyl-D-erythritol 4-phosphate cytidylyltransferase (253 aa).

Belongs to the IspD/TarI cytidylyltransferase family. IspD subfamily.

The catalysed reaction is 2-C-methyl-D-erythritol 4-phosphate + CTP + H(+) = 4-CDP-2-C-methyl-D-erythritol + diphosphate. Its pathway is isoprenoid biosynthesis; isopentenyl diphosphate biosynthesis via DXP pathway; isopentenyl diphosphate from 1-deoxy-D-xylulose 5-phosphate: step 2/6. In terms of biological role, catalyzes the formation of 4-diphosphocytidyl-2-C-methyl-D-erythritol from CTP and 2-C-methyl-D-erythritol 4-phosphate (MEP). This is 2-C-methyl-D-erythritol 4-phosphate cytidylyltransferase from Idiomarina loihiensis (strain ATCC BAA-735 / DSM 15497 / L2-TR).